Reading from the N-terminus, the 316-residue chain is Annexin A13 (316 aa).

G2 carries the N-myristoyl glycine lipid modification. Annexin repeat units follow at residues 14 to 85 (FDVD…ALLD), 86 to 157 (RPSE…SLLQ), 169 to 241 (DLAG…TLVR), and 245 to 316 (DQEG…ALLH).

It belongs to the annexin family. Monomer and homodimer. In terms of tissue distribution, detected in intestine, and at much lower levels also in kidney (at protein level).

The protein localises to the apical cell membrane. It is found in the cell membrane. The protein resides in the cytoplasmic vesicle. In terms of biological role, binds to membranes enriched in phosphatidylserine or phosphatidylglycerol in a calcium-dependent manner. Half-maximal membrane binding requires about 60 uM calcium. Does not bind to membranes that lack phospholipids with an acidic headgroup. Its function is as follows. Binds to membranes enriched in phosphatidylserine or phosphatidylglycerol in a calcium-dependent manner, but requires higher calcium levels for membrane binding than isoform A. Half-maximal membrane binding requires about 320 uM calcium. May play a role in vesicular traffic to the apical plasma membrane. The protein is Annexin A13 (ANXA13) of Canis lupus familiaris (Dog).